A 426-amino-acid chain; its full sequence is Serine--tRNA ligase (426 aa).

Position 231–233 (Thr231–Glu233) interacts with L-serine. Residue Arg262–Glu264 participates in ATP binding. Glu285 contacts L-serine. ATP is bound at residue Glu349–Ser352. Ser385 serves as a coordination point for L-serine.

It belongs to the class-II aminoacyl-tRNA synthetase family. Type-1 seryl-tRNA synthetase subfamily. As to quaternary structure, homodimer. The tRNA molecule binds across the dimer.

It is found in the cytoplasm. It carries out the reaction tRNA(Ser) + L-serine + ATP = L-seryl-tRNA(Ser) + AMP + diphosphate + H(+). The catalysed reaction is tRNA(Sec) + L-serine + ATP = L-seryl-tRNA(Sec) + AMP + diphosphate + H(+). Its pathway is aminoacyl-tRNA biosynthesis; selenocysteinyl-tRNA(Sec) biosynthesis; L-seryl-tRNA(Sec) from L-serine and tRNA(Sec): step 1/1. In terms of biological role, catalyzes the attachment of serine to tRNA(Ser). Is also able to aminoacylate tRNA(Sec) with serine, to form the misacylated tRNA L-seryl-tRNA(Sec), which will be further converted into selenocysteinyl-tRNA(Sec). The polypeptide is Serine--tRNA ligase (Legionella pneumophila (strain Lens)).